The following is a 601-amino-acid chain: Serine/threonine-protein phosphatase 2A 65 kDa regulatory subunit A beta isoform (601 aa).

A2 carries the post-translational modification N-acetylalanine. HEAT repeat units follow at residues 20–58, 59–96, 97–135, 136–173, 174–212, 213–251, 252–290, 291–333, 334–372, 373–411, 412–450, 451–489, 490–528, 529–567, and 568–601; these read DSLYPIAVLIDELRNEDVQLRLNSIKKLSTIALALGVER, TRSELLPFLTDTIYDEDEVLLALAEQLGNFTGLVGGPD, FAHCLLPPLENLATVEETVVRDKAVESLRQISQEHTPVA, LEAYFVPLVKRLASGDWFTSRTSACGLFSVCYPRASNA, VKAEIRQQFRSLCSDDTPMVRRAAASKLGEFAKVLELDS, VKSEIVPLFTSLASDEQDSVRLLAVEACVSIAQLLSQDD, LETLVMPTLRQAAEDKSWRVRYMVADRFSELQKAMGPKI, TLND…RETI, IMNQILPYIKELVSDTNQHVKSALASVIMGLSTILGKEN, TIEHLLPLFLAQLKDECPDVRLNIISNLDCVNEVIGIRQ, LSQSLLPAIVELAEDAKWRVRLAIIEYMPLLAGQLGVEF, FDEKLNSLCMAWLVDHVYAIREAATNNLMKLVQKFGTEW, AQNTIVPKVLVMANDPNYLHRMTTLFCINALSEACGQEI, TTKQMLPIVLKMAGDQVANVRFNVAKSLQKIGPILDTNA, and LQGEVKPVLQKLGQDEDMDVKYFAQEAISVLALA.

Belongs to the phosphatase 2A regulatory subunit A family. PP2A consists of a common heterodimeric core enzyme, composed of a 36 kDa catalytic subunit (subunit C) and a 65 kDa constant regulatory subunit (PR65 or subunit A), that associates with a variety of regulatory subunits. Proteins that associate with the core dimer include three families of regulatory subunits B (the R2/B/PR55/B55, R3/B''/PR72/PR130/PR59 and R5/B'/B56 families), the 48 kDa variable regulatory subunit, viral proteins, and cell signaling molecules. Interacts with IPO9. Interacts with SGO1. Interacts with RAF1.

Its function is as follows. The PR65 subunit of protein phosphatase 2A serves as a scaffolding molecule to coordinate the assembly of the catalytic subunit and a variable regulatory B subunit. The polypeptide is Serine/threonine-protein phosphatase 2A 65 kDa regulatory subunit A beta isoform (PPP2R1B) (Homo sapiens (Human)).